The sequence spans 490 residues: MNSSRSVNPRPSFAPRALSLAIALLLGAPAFAANSGEAPKNFGLDVKITGESENDRDLGTAPGGTLNDIGIDLRPWAFGQWGDWSAYFMGQAVAATDTIETDTLQSDTDDGNNSRNDGREPDKSYLAAREFWVDYAGLTAYPGEHLRFGRQRLREDSGQWQDTNIEALNWSFETTLLNAHAGVAQRFSEYRTDLDELAPEDKDRTHVFGDISTQWAPHHRIGVRIHHADDSGHLRRPGEEVDNLDKTYTGQLTWLGIEATGDAYNYRSSMPLNYWASATWLTGDRDNLTTTTVDDRRIATGKQSGDVNAFGVDLGLRWNIDEQWKAGVGYARGSGGGKDGEEQFQQTGLESNRSNFTGTRSRVHRFGEAFRGELSNLQAATLFGSWQLREDYDASLVYHKFWRVDDDSDIGTSGINAALQPGEKDIGQELDLVVTKYFKQGLLPASMSQYVDEPSALIRFRGGLFKPGDAYGPGTDSTMHRAFVDFIWRF.

The signal sequence occupies residues 1 to 32 (MNSSRSVNPRPSFAPRALSLAIALLLGAPAFA). Polar residues-rich tracts occupy residues 102–115 (DTLQ…NNSR) and 343–355 (QFQQ…NRSN). Disordered regions lie at residues 102–121 (DTLQ…GREP) and 331–355 (ARGS…NRSN).

This sequence belongs to the AlgE family.

The protein localises to the cell outer membrane. It participates in glycan biosynthesis; alginate biosynthesis. Has non-porin-like, channel-forming properties and probably functions as an alginate permeability pore. The chain is Alginate production protein AlgE (algE) from Pseudomonas aeruginosa (strain ATCC 15692 / DSM 22644 / CIP 104116 / JCM 14847 / LMG 12228 / 1C / PRS 101 / PAO1).